The sequence spans 33 residues: NVVVLATGGTIAGAGTNAFASQXGPLGMVVEGK.

The Asparaginase/glutaminase domain occupies 1–33 (NVVVLATGGTIAGAGTNAFASQXGPLGMVVEGK). Threonine 10 functions as the Acyl-ester intermediate in the catalytic mechanism.

The protein belongs to the asparaginase 1 family. As to quaternary structure, homotetramer.

The protein resides in the periplasm. The enzyme catalyses L-glutamine + H2O = L-glutamate + NH4(+). It carries out the reaction L-asparagine + H2O = L-aspartate + NH4(+). This Delftia acidovorans (Pseudomonas acidovorans) protein is Glutaminase-asparaginase (ansB).